We begin with the raw amino-acid sequence, 41 residues long: Large ribosomal subunit protein bL36 (41 aa).

The protein belongs to the bacterial ribosomal protein bL36 family.

The sequence is that of Large ribosomal subunit protein bL36 from Ruegeria sp. (strain TM1040) (Silicibacter sp.).